The following is a 386-amino-acid chain: Protein RETICULATA-RELATED 4, chloroplastic (386 aa).

Residues 1–61 constitute a chloroplast transit peptide; it reads MAIASCFFCV…RRVPITPVLS (61 aa). A disordered region spans residues 61–99; the sequence is SASSGNGGSDNNGGGLSGGGGGGDGGKNDGDGHGDEDRD. Residues 65–85 are compositionally biased toward gly residues; that stretch reads GNGGSDNNGGGLSGGGGGGDG. A compositionally biased stretch (basic and acidic residues) spans 86 to 99; the sequence is GKNDGDGHGDEDRD. 2 consecutive transmembrane segments (helical) span residues 201–221 and 273–293; these read VVFA…YLPA and KLFA…NAFI.

Belongs to the RETICULATA family.

Its subcellular location is the plastid. The protein localises to the chloroplast membrane. Functionally, may play a role in leaf development. The polypeptide is Protein RETICULATA-RELATED 4, chloroplastic (Arabidopsis thaliana (Mouse-ear cress)).